The following is a 213-amino-acid chain: Ribulose-phosphate 3-epimerase (213 aa).

Ser9 is a substrate binding site. His34, Asp36, and His66 together coordinate a divalent metal cation. Asp36 acts as the Proton acceptor in catalysis. Residues His66, 139–142, 166–168, and 186–187 each bind substrate; these read GFGG, DGG, and GS. Position 166 (Asp166) interacts with a divalent metal cation. Residue Asp166 is the Proton donor of the active site.

Belongs to the ribulose-phosphate 3-epimerase family. Requires Co(2+) as cofactor. The cofactor is Fe(2+). It depends on Mn(2+) as a cofactor. Zn(2+) serves as cofactor.

The enzyme catalyses D-ribulose 5-phosphate = D-xylulose 5-phosphate. It functions in the pathway carbohydrate degradation; pentose phosphate pathway; D-xylulose 5-phosphate from D-ribulose 5-phosphate (non-oxidative stage): step 1/1. Catalyzes the reversible epimerization of D-ribulose 5-phosphate to D-xylulose 5-phosphate. This Encephalitozoon cuniculi (strain GB-M1) (Microsporidian parasite) protein is Ribulose-phosphate 3-epimerase (RPE1).